We begin with the raw amino-acid sequence, 355 residues long: Small ribosomal subunit protein uS2 (355 aa).

The protein belongs to the universal ribosomal protein uS2 family.

This is Small ribosomal subunit protein uS2 from Methylorubrum extorquens (strain CM4 / NCIMB 13688) (Methylobacterium extorquens).